A 316-amino-acid chain; its full sequence is MQEFSLWCDFIERDFLENDFLKLINKGAICGATSNPSLFCEAITKSAFYKDEIAKLKGKKAKEIYETLALKDILQASSALMPLYEKDPNNGYISLEIDPFLEDDAAKSIDEAKRLFKTLNRPNVMIKVPASESGIEVVSALTQASIPVNVTLVFSPKIAGEIAQILAKEAQKRAVISVFVSRFDKEIDPLVPKNLQAQSGIINATECYYQINQHANKLTSTLFASTGVKSNSLAKDYYIKALCFKNSINTAPLEALNAYLLDPNTECQTPLKTTEIEAFKKELKVHNIDLENTAQKLLKEGLIAFKQSFEKLLSSF.

Catalysis depends on lysine 127, which acts as the Schiff-base intermediate with substrate.

This sequence belongs to the transaldolase family. Type 2 subfamily.

Its subcellular location is the cytoplasm. The catalysed reaction is D-sedoheptulose 7-phosphate + D-glyceraldehyde 3-phosphate = D-erythrose 4-phosphate + beta-D-fructose 6-phosphate. It participates in carbohydrate degradation; pentose phosphate pathway; D-glyceraldehyde 3-phosphate and beta-D-fructose 6-phosphate from D-ribose 5-phosphate and D-xylulose 5-phosphate (non-oxidative stage): step 2/3. Transaldolase is important for the balance of metabolites in the pentose-phosphate pathway. The chain is Transaldolase (tal) from Helicobacter pylori (strain ATCC 700392 / 26695) (Campylobacter pylori).